The primary structure comprises 159 residues: NADH-quinone oxidoreductase subunit I (159 aa).

4Fe-4S ferredoxin-type domains lie at arginine 51–aspartate 80 and threonine 90–asparagine 119. Residues cysteine 60, cysteine 63, cysteine 66, cysteine 70, cysteine 99, cysteine 102, cysteine 105, and cysteine 109 each coordinate [4Fe-4S] cluster.

Belongs to the complex I 23 kDa subunit family. As to quaternary structure, NDH-1 is composed of 14 different subunits. Subunits NuoA, H, J, K, L, M, N constitute the membrane sector of the complex. It depends on [4Fe-4S] cluster as a cofactor.

The protein resides in the cell inner membrane. It catalyses the reaction a quinone + NADH + 5 H(+)(in) = a quinol + NAD(+) + 4 H(+)(out). Its function is as follows. NDH-1 shuttles electrons from NADH, via FMN and iron-sulfur (Fe-S) centers, to quinones in the respiratory chain. The immediate electron acceptor for the enzyme in this species is believed to be ubiquinone. Couples the redox reaction to proton translocation (for every two electrons transferred, four hydrogen ions are translocated across the cytoplasmic membrane), and thus conserves the redox energy in a proton gradient. This is NADH-quinone oxidoreductase subunit I from Rickettsia typhi (strain ATCC VR-144 / Wilmington).